Reading from the N-terminus, the 450-residue chain is tRNA-2-methylthio-N(6)-dimethylallyladenosine synthase (450 aa).

Residues 3–118 form the MTTase N-terminal domain; sequence KKVFIKTFGC…LPELLQQRER (116 aa). Cys12, Cys49, Cys81, Cys155, Cys159, and Cys162 together coordinate [4Fe-4S] cluster. A Radical SAM core domain is found at 141–376; the sequence is SVQGASAFVS…VIDTHIRSIS (236 aa). Residues 377 to 440 form the TRAM domain; that stretch reads ASRVGTVQRI…AYTLRGQYCA (64 aa).

This sequence belongs to the methylthiotransferase family. MiaB subfamily. In terms of assembly, monomer. It depends on [4Fe-4S] cluster as a cofactor.

The protein localises to the cytoplasm. The enzyme catalyses N(6)-dimethylallyladenosine(37) in tRNA + (sulfur carrier)-SH + AH2 + 2 S-adenosyl-L-methionine = 2-methylsulfanyl-N(6)-dimethylallyladenosine(37) in tRNA + (sulfur carrier)-H + 5'-deoxyadenosine + L-methionine + A + S-adenosyl-L-homocysteine + 2 H(+). Functionally, catalyzes the methylthiolation of N6-(dimethylallyl)adenosine (i(6)A), leading to the formation of 2-methylthio-N6-(dimethylallyl)adenosine (ms(2)i(6)A) at position 37 in tRNAs that read codons beginning with uridine. The chain is tRNA-2-methylthio-N(6)-dimethylallyladenosine synthase from Verminephrobacter eiseniae (strain EF01-2).